Here is a 73-residue protein sequence, read N- to C-terminus: U-scoloptoxin(15)-Sm3a (73 aa).

The N-terminal stretch at 1 to 23 (MERKVFLLLFVIVLLTLPGFMSA) is a signal peptide.

The protein belongs to the scoloptoxin-15 family. Contains 2 disulfide bonds. In terms of tissue distribution, expressed by the venom gland.

The protein resides in the secreted. The chain is U-scoloptoxin(15)-Sm3a from Scolopendra morsitans (Tanzanian blue ringleg centipede).